The primary structure comprises 158 residues: UPF0178 protein Rpal_2485 (158 aa).

It belongs to the UPF0178 family.

The protein is UPF0178 protein Rpal_2485 of Rhodopseudomonas palustris (strain TIE-1).